Here is a 350-residue protein sequence, read N- to C-terminus: MKSADRFSPVKMEDAFANSLPTTPSLEVPVLTVSPADTSLQTKNVVAQTKPEEKKPAKKRKSWGQELPVPKTNLPPRKRAKTEDEKEQRRIERVLRNRAAAQTSRERKRLEMEKLESEKIDMEQQNQFLLQRLAQMEAENNRLSQQVAQLSAEVRGSRHSTPTSSSPASVSPTLTPTLFKQEGDEVPLDRIPFPTPSVTDYSPTLKPSSLAESPDLTQHPAVSVGGLEGDESALTLFDLGASIKHEPTHDLTAPLSDDDFRRLFNGDSSLESDSSLLEDGFAFDVLDSGDLSAFPFDSMVDFDTEPVTLEDLEQTNGLSDSASCKAASLQPSHGASTSRCDGQGIAAGSA.

Residues Met-1 to Glu-118 form a disordered region. Polar residues predominate over residues Pro-35–Ala-47. Composition is skewed to basic and acidic residues over residues Lys-81 to Leu-95 and Ser-104 to Glu-118. Positions Glu-87–Leu-150 constitute a bZIP domain. Positions Arg-89–Arg-142 are basic motif. The tract at residues Leu-143–Leu-150 is leucine-zipper. 3 disordered regions span residues Ala-152–Thr-175, Pro-194–Gln-218, and Ser-328–Ala-350. The span at Ser-160–Thr-175 shows a compositional bias: low complexity. 2 stretches are compositionally biased toward polar residues: residues Pro-196–Ala-211 and Leu-329–Cys-340.

Belongs to the bZIP family. As to quaternary structure, homodimer.

It is found in the nucleus. Functionally, transcriptional activator involved in the unfolded protein response (UPR) pathway. Recognizes and binds to the UPR element (UPRE) in the promoter of UPR-regulated genes. Increases the synthesis of endoplasmic reticulum-resident proteins required for protein folding as well as components of the secretory pathway. This is Transcriptional activator hacA (hacA) from Emericella nidulans (strain FGSC A4 / ATCC 38163 / CBS 112.46 / NRRL 194 / M139) (Aspergillus nidulans).